The chain runs to 96 residues: Large ribosomal subunit protein uL23 (96 aa).

It belongs to the universal ribosomal protein uL23 family. Part of the 50S ribosomal subunit. Contacts protein L29, and trigger factor when it is bound to the ribosome.

In terms of biological role, one of the early assembly proteins it binds 23S rRNA. One of the proteins that surrounds the polypeptide exit tunnel on the outside of the ribosome. Forms the main docking site for trigger factor binding to the ribosome. The chain is Large ribosomal subunit protein uL23 from Finegoldia magna (strain ATCC 29328 / DSM 20472 / WAL 2508) (Peptostreptococcus magnus).